Consider the following 265-residue polypeptide: Acetylglutamate kinase (265 aa).

Substrate contacts are provided by residues 41-42, arginine 63, and asparagine 156; that span reads GG.

It belongs to the acetylglutamate kinase family. ArgB subfamily.

It is found in the cytoplasm. It carries out the reaction N-acetyl-L-glutamate + ATP = N-acetyl-L-glutamyl 5-phosphate + ADP. The protein operates within amino-acid biosynthesis; L-arginine biosynthesis; N(2)-acetyl-L-ornithine from L-glutamate: step 2/4. Functionally, catalyzes the ATP-dependent phosphorylation of N-acetyl-L-glutamate. This chain is Acetylglutamate kinase, found in Brevibacillus brevis (strain 47 / JCM 6285 / NBRC 100599).